The sequence spans 283 residues: ATP synthase gamma chain (283 aa).

Belongs to the ATPase gamma chain family. As to quaternary structure, F-type ATPases have 2 components, CF(1) - the catalytic core - and CF(0) - the membrane proton channel. CF(1) has five subunits: alpha(3), beta(3), gamma(1), delta(1), epsilon(1). CF(0) has three main subunits: a, b and c.

The protein localises to the cell membrane. Functionally, produces ATP from ADP in the presence of a proton gradient across the membrane. The gamma chain is believed to be important in regulating ATPase activity and the flow of protons through the CF(0) complex. This is ATP synthase gamma chain from Clostridium botulinum (strain Eklund 17B / Type B).